A 67-amino-acid chain; its full sequence is Large ribosomal subunit protein bL35 (67 aa).

It belongs to the bacterial ribosomal protein bL35 family.

The polypeptide is Large ribosomal subunit protein bL35 (Dehalococcoides mccartyi (strain ATCC BAA-2266 / KCTC 15142 / 195) (Dehalococcoides ethenogenes (strain 195))).